The following is a 193-amino-acid chain: Secreted RxLR effector protein 126 (193 aa).

Positions 1–20 are cleaved as a signal peptide; sequence MRYLLAVLIAAAFVISSGTS. Positions 50-64 match the RxLR-dEER motif; the sequence is RMLQTKAVNGLEEER.

This sequence belongs to the RxLR effector family.

The protein resides in the secreted. It is found in the host membrane. In terms of biological role, secreted effector that completely suppresses the host cell death induced by cell death-inducing proteins. In Plasmopara viticola (Downy mildew of grapevine), this protein is Secreted RxLR effector protein 126.